Consider the following 689-residue polypeptide: Glycine--tRNA ligase beta subunit (689 aa).

The protein belongs to the class-II aminoacyl-tRNA synthetase family. As to quaternary structure, tetramer of two alpha and two beta subunits.

The protein localises to the cytoplasm. It carries out the reaction tRNA(Gly) + glycine + ATP = glycyl-tRNA(Gly) + AMP + diphosphate. This Glaesserella parasuis serovar 5 (strain SH0165) (Haemophilus parasuis) protein is Glycine--tRNA ligase beta subunit.